The chain runs to 439 residues: Probable cinnamyl alcohol dehydrogenase 8C (439 aa).

Zn(2+) is bound at residue Cys-120. Position 122 (Thr-122) interacts with NADP(+). The Zn(2+) site is built by His-142, Glu-143, Cys-173, Cys-176, Cys-179, Cys-187, and Cys-239. Residues Thr-243, 264–269 (GLGGLG), 287–292 (STSPGK), Thr-327, Gly-351, and 374–376 (NCV) contribute to the NADP(+) site.

It belongs to the zinc-containing alcohol dehydrogenase family. In terms of assembly, homodimer. The cofactor is Zn(2+).

It carries out the reaction (E)-cinnamyl alcohol + NADP(+) = (E)-cinnamaldehyde + NADPH + H(+). The enzyme catalyses (E)-coniferol + NADP(+) = (E)-coniferaldehyde + NADPH + H(+). It catalyses the reaction (E)-sinapyl alcohol + NADP(+) = (E)-sinapaldehyde + NADPH + H(+). The catalysed reaction is (E)-4-coumaroyl alcohol + NADP(+) = (E)-4-coumaraldehyde + NADPH + H(+). It carries out the reaction (E)-caffeyl alcohol + NADP(+) = (E)-caffeyl aldehyde + NADPH + H(+). It participates in aromatic compound metabolism; phenylpropanoid biosynthesis. Involved in lignin biosynthesis. Catalyzes the final step specific for the production of lignin monomers. Catalyzes the NADPH-dependent reduction of coniferaldehyde, 5-hydroxyconiferaldehyde, sinapaldehyde, 4-coumaraldehyde and caffeyl aldehyde to their respective alcohols. The chain is Probable cinnamyl alcohol dehydrogenase 8C from Oryza sativa subsp. japonica (Rice).